The chain runs to 390 residues: Dihydroorotase (390 aa).

His-54 and His-56 together coordinate Zn(2+). Residues 56 to 58 (HIR) and Asn-88 contribute to the substrate site. Positions 136, 160, 197, and 259 each coordinate Zn(2+). The residue at position 136 (Lys-136) is an N6-carboxylysine. The active site involves Asp-259. Substrate-binding positions include His-263 and 277 to 278 (PG).

It belongs to the metallo-dependent hydrolases superfamily. DHOase family. Class I DHOase subfamily. The cofactor is Zn(2+).

It carries out the reaction (S)-dihydroorotate + H2O = N-carbamoyl-L-aspartate + H(+). Its pathway is pyrimidine metabolism; UMP biosynthesis via de novo pathway; (S)-dihydroorotate from bicarbonate: step 3/3. Functionally, catalyzes the reversible cyclization of carbamoyl aspartate to dihydroorotate. The sequence is that of Dihydroorotase from Saccharolobus solfataricus (strain ATCC 35092 / DSM 1617 / JCM 11322 / P2) (Sulfolobus solfataricus).